Here is a 362-residue protein sequence, read N- to C-terminus: GTP cyclohydrolase FolE2 (362 aa).

It belongs to the GTP cyclohydrolase IV family.

It carries out the reaction GTP + H2O = 7,8-dihydroneopterin 3'-triphosphate + formate + H(+). It participates in cofactor biosynthesis; 7,8-dihydroneopterin triphosphate biosynthesis; 7,8-dihydroneopterin triphosphate from GTP: step 1/1. Its function is as follows. Converts GTP to 7,8-dihydroneopterin triphosphate. This chain is GTP cyclohydrolase FolE2, found in Jannaschia sp. (strain CCS1).